We begin with the raw amino-acid sequence, 255 residues long: 1-(5-phosphoribosyl)-5-[(5-phosphoribosylamino)methylideneamino] imidazole-4-carboxamide isomerase (255 aa).

Residue D8 is the Proton acceptor of the active site. The Proton donor role is filled by D129.

The protein belongs to the HisA/HisF family.

The protein resides in the cytoplasm. It carries out the reaction 1-(5-phospho-beta-D-ribosyl)-5-[(5-phospho-beta-D-ribosylamino)methylideneamino]imidazole-4-carboxamide = 5-[(5-phospho-1-deoxy-D-ribulos-1-ylimino)methylamino]-1-(5-phospho-beta-D-ribosyl)imidazole-4-carboxamide. It functions in the pathway amino-acid biosynthesis; L-histidine biosynthesis; L-histidine from 5-phospho-alpha-D-ribose 1-diphosphate: step 4/9. This Prochlorococcus marinus (strain MIT 9301) protein is 1-(5-phosphoribosyl)-5-[(5-phosphoribosylamino)methylideneamino] imidazole-4-carboxamide isomerase.